The primary structure comprises 440 residues: MVMEKLGDSLQGALKKLIGAGRIDERTVNEVVKDIQRALLQADVNVKLVMGMSQRIKERAMKEEPPAGMNPREHVIRIVYQELMEIIGKGAEIQLKPQTIMMVGLQGSGKTTSAAKLARYFQRKGLKAGVVAADTFRPGAYHQLKTLAEKLNVGFYGEEGNPDAVEITKNGLKALEKYDIRIVDTAGRHALEADLIEEMERIHAVAKPDHKFMVLDAGIGQQASQQAHAFNDSVGITGVIITKLDGTAKGGGALSAVSETKAPIAFIGVGETPEDFEKFEADRFISRLLGMGDLKSLMEKAEESLSEEDVNVEALMQGRFTLKDMYKQLEAMNKMGPLKQIMSMLPMGMGGMKFSDEMFQATSDKMKNYKVIMDSMTEEEMTDPRVIGGSRIKRISKGSGCSSEDVRELLKYHKTMQTALKGFRGGKFNIQKMMKKKMGM.

GTP-binding positions include 104-111 (GLQGSGKT), 184-188 (DTAGR), and 242-245 (TKLD).

This sequence belongs to the GTP-binding SRP family. SRP54 subfamily. Part of the signal recognition particle protein translocation system, which is composed of SRP and FtsY. Archaeal SRP consists of a 7S RNA molecule of 300 nucleotides and two protein subunits: SRP54 and SRP19.

It localises to the cytoplasm. The enzyme catalyses GTP + H2O = GDP + phosphate + H(+). Functionally, involved in targeting and insertion of nascent membrane proteins into the cytoplasmic membrane. Binds to the hydrophobic signal sequence of the ribosome-nascent chain (RNC) as it emerges from the ribosomes. The SRP-RNC complex is then targeted to the cytoplasmic membrane where it interacts with the SRP receptor FtsY. The chain is Signal recognition particle 54 kDa protein from Methanosarcina acetivorans (strain ATCC 35395 / DSM 2834 / JCM 12185 / C2A).